The primary structure comprises 212 residues: Probable chemoreceptor glutamine deamidase CheD (212 aa).

It belongs to the CheD family.

It catalyses the reaction L-glutaminyl-[protein] + H2O = L-glutamyl-[protein] + NH4(+). Its function is as follows. Probably deamidates glutamine residues to glutamate on methyl-accepting chemotaxis receptors (MCPs), playing an important role in chemotaxis. The sequence is that of Probable chemoreceptor glutamine deamidase CheD from Bordetella parapertussis (strain 12822 / ATCC BAA-587 / NCTC 13253).